Reading from the N-terminus, the 632-residue chain is Palmitoyltransferase ZDHHC17 (632 aa).

Topologically, residues 1-304 (MQREEGFNTK…LKADKEFRQK (304 aa)) are cytoplasmic. Residues 11–305 (MADGPDEYDT…KADKEFRQKV (295 aa)) are necessary and sufficient for interaction with DNAJC5 and SNAP25. ANK repeat units follow at residues 51-86 (THID…VRQP), 89-118 (ENVT…IVDQ), 123-152 (LNST…DPSL), 156-185 (EGCS…DVDM), 189-219 (NGMT…SVNL), 224-253 (HKNT…NVDA), and 257-286 (KGES…AKGY). The next 2 helical transmembrane spans lie at 305 to 325 (VMLG…DLNI) and 326 to 346 (DSWL…QFLS). The Cytoplasmic segment spans residues 347–357 (KSFFDHSMHSA). A helical membrane pass occupies residues 358 to 378 (LPLGIYLATKFWMYVTWFFWF). The Lumenal segment spans residues 379–381 (WND). A helical membrane pass occupies residues 382–402 (LNFLFIHLPFLANSVALFYNF). The Cytoplasmic portion of the chain corresponds to 403 to 480 (GKSWKSDPGI…GNCVGAGNHR (78 aa)). A DHHC domain is found at 437-487 (IFCSTCLIRKPVRSKHCGVCNRCIAKFDHHCPWVGNCVGAGNHRYFMGYLF). The S-palmitoyl cysteine intermediate role is filled by C467. A helical membrane pass occupies residues 481–501 (YFMGYLFFLLFMICWMIYGCI). The Lumenal segment spans residues 502-529 (SYWGLHCETTYTKDGFWTYITQIATCSP). The chain crosses the membrane as a helical span at residues 530-550 (WMFWMFLNSVFHFMWVAVLLM). Residues 551 to 632 (CQMYQISCLG…QISGSGYQLV (82 aa)) lie on the Cytoplasmic side of the membrane.

The protein belongs to the DHHC palmitoyltransferase family. AKR/ZDHHC17 subfamily. As to quaternary structure, interacts (via ANK repeats) with numerous proteins (via the consensus sequence motif [VIAP]-[VIT]-x-x-Q-P). Interacts (via ANK repeats) with CLIP3. Interacts (via ANK repeats) with HTT; this interaction is inversely correlated to the length of the polyglutamine tract added to the huntingtin protein in Huntington disease. Interacts (via ANK repeats) with DNAJC5 (via C-terminus). Interacts (via ANK repeats) with MAP6. Interacts (via ANK repeats) with SNAP23. Interacts (via ANK repeats) with SNAP25. Interacts (via ANK repeats) with EVL. Interacts with SPRED1 and SPRED3. Interacts with GPM6A and OPTN. May interact (via ANK repeats) with SPRED2. May interact with NTRK1; may regulate its localization and function. Autopalmitoylated. Autopalmitoylation has a regulatory role in ZDHHC17-mediated Mg(2+) transport. In terms of tissue distribution, expressed in all brain regions. Expression is highest in the cortex, cerebellum, occipital lobe and caudate and lowest in the spinal cord. Expression is also seen in testis, pancreas, heart and kidney.

Its subcellular location is the golgi apparatus membrane. It localises to the cytoplasmic vesicle membrane. The protein resides in the presynaptic cell membrane. It catalyses the reaction L-cysteinyl-[protein] + hexadecanoyl-CoA = S-hexadecanoyl-L-cysteinyl-[protein] + CoA. The enzyme catalyses L-cysteinyl-[protein] + tetradecanoyl-CoA = S-tetradecanoyl-L-cysteinyl-[protein] + CoA. It carries out the reaction L-cysteinyl-[protein] + octadecanoyl-CoA = S-octadecanoyl-L-cysteinyl-[protein] + CoA. In terms of biological role, palmitoyltransferase that catalyzes the addition of palmitate onto various protein substrates and is involved in a variety of cellular processes. Has no stringent fatty acid selectivity and in addition to palmitate can also transfer onto target proteins myristate from tetradecanoyl-CoA and stearate from octadecanoyl-CoA. Palmitoyltransferase specific for a subset of neuronal proteins, including SNAP25, DLG4/PSD95, GAD2, SYT1 and HTT. Also palmitoylates neuronal protein GPM6A as well as SPRED1 and SPRED3. Could also play a role in axonogenesis through the regulation of NTRK1 and the downstream ERK1/ERK2 signaling cascade. May be involved in the sorting or targeting of critical proteins involved in the initiating events of endocytosis at the plasma membrane. May play a role in Mg(2+) transport. Could also palmitoylate DNAJC5 and regulate its localization to the Golgi membrane. Palmitoylates CASP6, thereby preventing its dimerization and subsequent activation. In Homo sapiens (Human), this protein is Palmitoyltransferase ZDHHC17.